The sequence spans 115 residues: UPF0738 protein SERP0585 (115 aa).

Belongs to the UPF0738 family.

This chain is UPF0738 protein SERP0585, found in Staphylococcus epidermidis (strain ATCC 35984 / DSM 28319 / BCRC 17069 / CCUG 31568 / BM 3577 / RP62A).